The primary structure comprises 113 residues: N-alpha-acetyltransferase 38, NatC auxiliary subunit (113 aa).

Residues 1 to 29 (MAAVLEENGCSRQSSPGAGDSDAEAGDTA) are disordered. Residues 28 to 106 (TARHKLESLL…IVSIQVELES (79 aa)) form the Sm domain.

This sequence belongs to the snRNP Sm proteins family. As to quaternary structure, component of the N-terminal acetyltransferase C (NatC) complex.

It is found in the cytoplasm. The protein localises to the nucleus. In terms of biological role, auxillary component of the N-terminal acetyltransferase C (NatC) complex which catalyzes acetylation of N-terminal methionine residues. N-terminal acetylation protects proteins from ubiquitination and degradation by the N-end rule pathway. This Xenopus tropicalis (Western clawed frog) protein is N-alpha-acetyltransferase 38, NatC auxiliary subunit (naa38).